Consider the following 176-residue polypeptide: ATP synthase subunit b (176 aa).

Residues 24–43 (FAFRVVNFVIFAGIIWKAAG) traverse the membrane as a helical segment.

Belongs to the ATPase B chain family. F-type ATPases have 2 components, F(1) - the catalytic core - and F(0) - the membrane proton channel. F(1) has five subunits: alpha(3), beta(3), gamma(1), delta(1), epsilon(1). F(0) has three main subunits: a(1), b(2) and c(10-14). The alpha and beta chains form an alternating ring which encloses part of the gamma chain. F(1) is attached to F(0) by a central stalk formed by the gamma and epsilon chains, while a peripheral stalk is formed by the delta and b chains.

It localises to the cell inner membrane. Its function is as follows. F(1)F(0) ATP synthase produces ATP from ADP in the presence of a proton or sodium gradient. F-type ATPases consist of two structural domains, F(1) containing the extramembraneous catalytic core and F(0) containing the membrane proton channel, linked together by a central stalk and a peripheral stalk. During catalysis, ATP synthesis in the catalytic domain of F(1) is coupled via a rotary mechanism of the central stalk subunits to proton translocation. Component of the F(0) channel, it forms part of the peripheral stalk, linking F(1) to F(0). The protein is ATP synthase subunit b of Nitratidesulfovibrio vulgaris (strain ATCC 29579 / DSM 644 / CCUG 34227 / NCIMB 8303 / VKM B-1760 / Hildenborough) (Desulfovibrio vulgaris).